The sequence spans 175 residues: Large ribosomal subunit protein uL10 (175 aa).

Belongs to the universal ribosomal protein uL10 family. Part of the ribosomal stalk of the 50S ribosomal subunit. The N-terminus interacts with L11 and the large rRNA to form the base of the stalk. The C-terminus forms an elongated spine to which L12 dimers bind in a sequential fashion forming a multimeric L10(L12)X complex.

Its function is as follows. Forms part of the ribosomal stalk, playing a central role in the interaction of the ribosome with GTP-bound translation factors. The polypeptide is Large ribosomal subunit protein uL10 (Cyanothece sp. (strain PCC 7425 / ATCC 29141)).